The following is an 87-amino-acid chain: Chaperone NapD (87 aa).

Belongs to the NapD family. As to quaternary structure, interacts with the cytoplasmic NapA precursor.

Its subcellular location is the cytoplasm. Chaperone for NapA, the catalytic subunit of the periplasmic nitrate reductase. It binds directly and specifically to the twin-arginine signal peptide of NapA, preventing premature interaction with the Tat translocase and premature export. This chain is Chaperone NapD, found in Escherichia coli O157:H7.